We begin with the raw amino-acid sequence, 449 residues long: tRNA-2-methylthio-N(6)-dimethylallyladenosine synthase (449 aa).

An MTTase N-terminal domain is found at 3 to 118 (KKVFVKTFGC…LPELLAQREA (116 aa)). Residues Cys-12, Cys-49, Cys-81, Cys-155, Cys-159, and Cys-162 each contribute to the [4Fe-4S] cluster site. Residues 141 to 376 (RVEGASAFVS…VINANIKSIS (236 aa)) enclose the Radical SAM core domain. The TRAM domain occupies 377 to 440 (ESRVGTVQRI…AYTLRGEVVT (64 aa)).

The protein belongs to the methylthiotransferase family. MiaB subfamily. As to quaternary structure, monomer. It depends on [4Fe-4S] cluster as a cofactor.

It is found in the cytoplasm. The enzyme catalyses N(6)-dimethylallyladenosine(37) in tRNA + (sulfur carrier)-SH + AH2 + 2 S-adenosyl-L-methionine = 2-methylsulfanyl-N(6)-dimethylallyladenosine(37) in tRNA + (sulfur carrier)-H + 5'-deoxyadenosine + L-methionine + A + S-adenosyl-L-homocysteine + 2 H(+). Catalyzes the methylthiolation of N6-(dimethylallyl)adenosine (i(6)A), leading to the formation of 2-methylthio-N6-(dimethylallyl)adenosine (ms(2)i(6)A) at position 37 in tRNAs that read codons beginning with uridine. The sequence is that of tRNA-2-methylthio-N(6)-dimethylallyladenosine synthase from Paracidovorax citrulli (strain AAC00-1) (Acidovorax citrulli).